Consider the following 285-residue polypeptide: Ribosomal RNA small subunit methyltransferase A (285 aa).

Histidine 27, leucine 29, glycine 54, glutamate 75, aspartate 100, and asparagine 120 together coordinate S-adenosyl-L-methionine.

This sequence belongs to the class I-like SAM-binding methyltransferase superfamily. rRNA adenine N(6)-methyltransferase family. RsmA subfamily.

Its subcellular location is the cytoplasm. It catalyses the reaction adenosine(1518)/adenosine(1519) in 16S rRNA + 4 S-adenosyl-L-methionine = N(6)-dimethyladenosine(1518)/N(6)-dimethyladenosine(1519) in 16S rRNA + 4 S-adenosyl-L-homocysteine + 4 H(+). Its function is as follows. Specifically dimethylates two adjacent adenosines (A1518 and A1519) in the loop of a conserved hairpin near the 3'-end of 16S rRNA in the 30S particle. May play a critical role in biogenesis of 30S subunits. This chain is Ribosomal RNA small subunit methyltransferase A, found in Phenylobacterium zucineum (strain HLK1).